Consider the following 680-residue polypeptide: Probable galacturonosyltransferase 3 (680 aa).

Topologically, residues 1–6 (MTTFST) are cytoplasmic. A helical; Signal-anchor for type II membrane protein membrane pass occupies residues 7 to 27 (CAAFLSLVVVLHAVHVGGAIL). The Lumenal portion of the chain corresponds to 28–680 (ESQAPHRELK…PYLRRCDINE (653 aa)). The interval 118-146 (SFQNDTGMEDNASHSTTNQTDESENQFPN) is disordered. Residues N121, N128, N135, N239, N386, N438, N545, N578, N610, and N631 are each glycosylated (N-linked (GlcNAc...) asparagine). The span at 130–145 (SHSTTNQTDESENQFP) shows a compositional bias: polar residues.

The protein belongs to the glycosyltransferase 8 family. Expressed in roots, inflorescences, siliques, leaves and stems.

The protein resides in the golgi apparatus membrane. The protein operates within glycan metabolism; pectin biosynthesis. May be involved in pectin and/or xylans biosynthesis in cell walls. This chain is Probable galacturonosyltransferase 3 (GAUT3), found in Arabidopsis thaliana (Mouse-ear cress).